Consider the following 106-residue polypeptide: Movement protein TGB2 (106 aa).

Residues 1–9 (MPLTPPPDH) are Cytoplasmic-facing. Residues 10–30 (TKVLLVAAIGLSIVASILTYS) form a helical membrane-spanning segment. Residues 31–71 (RNTLPQVGDHSHLLPHGGVYKDGTKTIVYGGPRKLNSLEGG) are Lumenal-facing. A helical membrane pass occupies residues 72–92 (FNLPVQPWFLVILLSAAIFLL). At 93–106 (SCRSGHRRVCGQCH) the chain is on the cytoplasmic side.

The protein belongs to the Tymovirales TGBp2 protein family.

The protein localises to the host endoplasmic reticulum membrane. Its function is as follows. Plays a role in viral cell-to-cell propagation, by facilitating genome transport to neighboring plant cells through plasmosdesmata,. This chain is Movement protein TGB2, found in Chrysanthemum morifolium (Florist's daisy).